The sequence spans 247 residues: E3 ubiquitin-protein ligase RNF182 (247 aa).

The RING-type zinc-finger motif lies at 20–68; the sequence is CKICYNRYNLKQRKPKVLECCHRVCAKCLYKIIDFGDSPQGVIVCPFCR. The next 2 membrane-spanning stretches (helical) occupy residues 184–204 and 211–231; these read VLVWLLGLLYFSSLPLGIYLL and LGVVFVSLVPSSLVILMVYGF.

In terms of assembly, interacts with ATP6V0C.

The protein localises to the membrane. It is found in the cytoplasm. The catalysed reaction is S-ubiquitinyl-[E2 ubiquitin-conjugating enzyme]-L-cysteine + [acceptor protein]-L-lysine = [E2 ubiquitin-conjugating enzyme]-L-cysteine + N(6)-ubiquitinyl-[acceptor protein]-L-lysine.. It functions in the pathway protein modification; protein ubiquitination. In terms of biological role, E3 ubiquitin-protein ligase that mediates the ubiquitination of ATP6V0C and targets it to degradation via the ubiquitin-proteasome pathway. Also plays a role in the inhibition of TLR-triggered innate immune response by mediating 'Lys'-48-linked ubiquitination and subsequent degradation of NF-kappa-B component RELA. This chain is E3 ubiquitin-protein ligase RNF182 (Rnf182), found in Rattus norvegicus (Rat).